Consider the following 476-residue polypeptide: Proline--tRNA ligase (476 aa).

Belongs to the class-II aminoacyl-tRNA synthetase family. ProS type 3 subfamily. Homodimer.

Its subcellular location is the cytoplasm. The catalysed reaction is tRNA(Pro) + L-proline + ATP = L-prolyl-tRNA(Pro) + AMP + diphosphate. Its function is as follows. Catalyzes the attachment of proline to tRNA(Pro) in a two-step reaction: proline is first activated by ATP to form Pro-AMP and then transferred to the acceptor end of tRNA(Pro). The chain is Proline--tRNA ligase from Rubrobacter xylanophilus (strain DSM 9941 / JCM 11954 / NBRC 16129 / PRD-1).